An 832-amino-acid chain; its full sequence is AP-1 complex subunit gamma-1 (832 aa).

A GAE domain is found at 733 to 832 (LNVYASLLSA…QFDHKFDETL (100 aa)).

Adapter protein complex 1 (AP-1) is a heterotetramer composed of two large adaptins (gamma-type subunit APL4 and beta-type subunit APL2), a medium adaptin (mu-type subunit APM1) and a small adaptin (sigma-type subunit APS1). AP-1 interacts with clathrin. Also a component of the AP-1R complex composed of at least APM2, APL4 and APS1.

Its subcellular location is the cytoplasm. The protein resides in the golgi apparatus membrane. The protein localises to the cytoplasmic vesicle. It is found in the clathrin-coated vesicle membrane. Adaptins are components of the adapter complexes which link clathrin to receptors in coated vesicles. Clathrin-associated protein complexes are believed to interact with the cytoplasmic tails of membrane proteins, leading to their selection and concentration. The AP-1 complex interacts directly with clathrin. Component of the AP-1-related (AP-1R) complex, an adapter protein complex that mediates sorting of cargo SNARE SNC1. In contrast to the APM1-containing AP-1 complex, AP-1R is incapable of sorting CHS3. The protein is AP-1 complex subunit gamma-1 (APL4) of Saccharomyces cerevisiae (strain ATCC 204508 / S288c) (Baker's yeast).